Reading from the N-terminus, the 72-residue chain is UPF0270 protein Ent638_3781 (72 aa).

The protein belongs to the UPF0270 family.

The protein is UPF0270 protein Ent638_3781 of Enterobacter sp. (strain 638).